Consider the following 476-residue polypeptide: Replication factor C large subunit (476 aa).

Residue 43–50 coordinates ATP; the sequence is GKPGIGKT. The interval 435 to 476 is disordered; the sequence is LEALRMQEPPVPETPPAAEEQPLEEPQEEKKLAPKQATLDFF.

Belongs to the activator 1 small subunits family. RfcL subfamily. As to quaternary structure, heteromultimer composed of small subunits (RfcS) and large subunits (RfcL).

Functionally, part of the RFC clamp loader complex which loads the PCNA sliding clamp onto DNA. This chain is Replication factor C large subunit, found in Methanocorpusculum labreanum (strain ATCC 43576 / DSM 4855 / Z).